Consider the following 244-residue polypeptide: 5-oxoprolinase subunit A (244 aa).

It belongs to the LamB/PxpA family. Forms a complex composed of PxpA, PxpB and PxpC.

The catalysed reaction is 5-oxo-L-proline + ATP + 2 H2O = L-glutamate + ADP + phosphate + H(+). Functionally, catalyzes the cleavage of 5-oxoproline to form L-glutamate coupled to the hydrolysis of ATP to ADP and inorganic phosphate. The polypeptide is 5-oxoprolinase subunit A (Escherichia coli O157:H7).